The chain runs to 838 residues: Protein kintoun (838 aa).

Disordered stretches follow at residues 106-125 (RPKN…LNWS), 212-238 (NPTA…GKPE), 370-411 (LRHF…TSSP), 557-696 (NAPL…DSCS), and 776-838 (QQRR…EMDD). The segment covering 114–125 (DPSSGSRGLNWS) has biased composition (polar residues). The segment covering 370-380 (LRHFSREDSGV) has biased composition (basic and acidic residues). Ser-378 bears the Phosphoserine mark. Residues 389 to 398 (PVEEDPDGEL) are compositionally biased toward acidic residues. Residues 557 to 572 (NAPLDVEFERNQEGHA) are compositionally biased toward basic and acidic residues. Acidic residues predominate over residues 583 to 592 (EEEEEEEDKE). A compositionally biased stretch (low complexity) spans 601-611 (DQQQQQQVQNK). Composition is skewed to basic residues over residues 612–623 (KSGKKQRKRNKK) and 673–683 (RSHRGILKRFS). The residue at position 781 (Ser-781) is a Phosphoserine. A compositionally biased stretch (basic and acidic residues) spans 789–802 (EETRGSALKQKENP).

Belongs to the PIH1 family. Kintoun subfamily. As to quaternary structure, interacts with Pp1alpha-96A, Pp1-87B, Pp1-13C and flw.

It localises to the cytoplasm. Functionally, required for cytoplasmic pre-assembly of axonemal dyneins, thereby playing a central role in motility in cilia and flagella. Involved in pre-assembly of dynein arm complexes in the cytoplasm before intraflagellar transport loads them for the ciliary compartment. The chain is Protein kintoun from Drosophila sechellia (Fruit fly).